We begin with the raw amino-acid sequence, 253 residues long: uncharacterized protein (253 aa).

Residues 30–236 form the BPL/LPL catalytic domain; sequence AQGRQVAQLW…AVDDDAALMA (207 aa).

This is an uncharacterized protein from Cupriavidus necator (strain ATCC 17699 / DSM 428 / KCTC 22496 / NCIMB 10442 / H16 / Stanier 337) (Ralstonia eutropha).